Here is a 312-residue protein sequence, read N- to C-terminus: 6-hydroxy-3-succinoylpyridine 3-monooxygenase HspA (312 aa).

The NYN domain occupies 14-210 (IYIDGYNFYY…RSANTDLIKF (197 aa)).

It carries out the reaction 4-(6-hydroxypyridin-3-yl)-4-oxobutanoate + 2 NADH + O2 + 2 H(+) = 2,5-dihydroxypyridine + succinate semialdehyde + 2 NAD(+) + H2O. It participates in alkaloid degradation; nicotine degradation. Its function is as follows. Involved in the nicotine degradation. Catalyzes the cleavage of 6-hydroxy-3-succinoylpyridine (HSP) by incorporation of oxygen at the 3-position to produce to 2,5-dihydroxypyridine (DHP) and succinic semialdehyde. The polypeptide is 6-hydroxy-3-succinoylpyridine 3-monooxygenase HspA (Pseudomonas putida (strain DSM 28022 / S16)).